Consider the following 171-residue polypeptide: 3-hydroxydecanoyl-[acyl-carrier-protein] dehydratase (171 aa).

Residue histidine 70 is part of the active site.

The protein belongs to the thioester dehydratase family. FabA subfamily. As to quaternary structure, homodimer.

The protein resides in the cytoplasm. The catalysed reaction is a (3R)-hydroxyacyl-[ACP] = a (2E)-enoyl-[ACP] + H2O. It carries out the reaction (3R)-hydroxydecanoyl-[ACP] = (2E)-decenoyl-[ACP] + H2O. The enzyme catalyses (2E)-decenoyl-[ACP] = (3Z)-decenoyl-[ACP]. The protein operates within lipid metabolism; fatty acid biosynthesis. Functionally, necessary for the introduction of cis unsaturation into fatty acids. Catalyzes the dehydration of (3R)-3-hydroxydecanoyl-ACP to E-(2)-decenoyl-ACP and then its isomerization to Z-(3)-decenoyl-ACP. Can catalyze the dehydratase reaction for beta-hydroxyacyl-ACPs with saturated chain lengths up to 16:0, being most active on intermediate chain length. In Methylococcus capsulatus (strain ATCC 33009 / NCIMB 11132 / Bath), this protein is 3-hydroxydecanoyl-[acyl-carrier-protein] dehydratase.